The sequence spans 274 residues: Putative hydro-lyase SAV_6940 (274 aa).

This sequence belongs to the D-glutamate cyclase family.

This chain is Putative hydro-lyase SAV_6940, found in Streptomyces avermitilis (strain ATCC 31267 / DSM 46492 / JCM 5070 / NBRC 14893 / NCIMB 12804 / NRRL 8165 / MA-4680).